A 182-amino-acid chain; its full sequence is Early nodulin-like protein 10 (182 aa).

Residues 1–20 form the signal peptide; that stretch reads MSSVMMCCCLLLLFGLLSEG. Positions 21 to 125 constitute a Phytocyanin domain; it reads REILVGGKSN…GEKLRVVVLS (105 aa). Asn-65 is a glycosylation site (N-linked (GlcNAc...) asparagine). The cysteines at positions 79 and 113 are disulfide-linked. Residues Asn-129 and Asn-148 are each glycosylated (N-linked (GlcNAc...) asparagine). Asn-157 is lipidated: GPI-anchor amidated asparagine. The propeptide at 158-182 is removed in mature form; the sequence is AHIMNKGSLNTAWSLLLLLPLGLLV.

The protein belongs to the early nodulin-like (ENODL) family. As to expression, mostly expressed in flowers, and, to a lower extent, in leaves, but barely in seedlings, stems, seeds and roots.

The protein localises to the cell membrane. Its function is as follows. May act as a carbohydrate transporter. The protein is Early nodulin-like protein 10 of Arabidopsis thaliana (Mouse-ear cress).